Consider the following 259-residue polypeptide: Phosphatidylglycerol--prolipoprotein diacylglyceryl transferase (259 aa).

7 helical membrane-spanning segments follow: residues 9–29, 48–68, 83–103, 114–133, 167–187, 197–217, and 227–247; these read LGPL…ILAV, DFIL…YVIF, IWHG…VLFI, DFLD…GRWG, TPTF…IMIL, GEVA…IEGM, and LRVS…LIVI. Arginine 131 is a binding site for a 1,2-diacyl-sn-glycero-3-phospho-(1'-sn-glycerol).

The protein belongs to the Lgt family.

It localises to the cell membrane. It carries out the reaction L-cysteinyl-[prolipoprotein] + a 1,2-diacyl-sn-glycero-3-phospho-(1'-sn-glycerol) = an S-1,2-diacyl-sn-glyceryl-L-cysteinyl-[prolipoprotein] + sn-glycerol 1-phosphate + H(+). The protein operates within protein modification; lipoprotein biosynthesis (diacylglyceryl transfer). Catalyzes the transfer of the diacylglyceryl group from phosphatidylglycerol to the sulfhydryl group of the N-terminal cysteine of a prolipoprotein, the first step in the formation of mature lipoproteins. The polypeptide is Phosphatidylglycerol--prolipoprotein diacylglyceryl transferase (Streptococcus mutans serotype c (strain ATCC 700610 / UA159)).